Consider the following 415-residue polypeptide: Peptide chain release factor subunit 1 (415 aa).

Belongs to the eukaryotic release factor 1 family. In terms of assembly, heterodimer of two subunits, one of which binds GTP.

The protein localises to the cytoplasm. Its function is as follows. Directs the termination of nascent peptide synthesis (translation) in response to the termination codons UAA, UAG and UGA. The chain is Peptide chain release factor subunit 1 from Thermococcus kodakarensis (strain ATCC BAA-918 / JCM 12380 / KOD1) (Pyrococcus kodakaraensis (strain KOD1)).